We begin with the raw amino-acid sequence, 434 residues long: Pyrichalasin H cluster regulator BC2 (434 aa).

Disordered regions lie at residues 297–321 and 362–383; these read GSSPSGTPESELTSPHKRATTCSPL and HPGHEDHQQQQEEVKQHDRLSH. The segment covering 298–309 has biased composition (polar residues); the sequence is SSPSGTPESELT. Over residues 362-380 the composition is skewed to basic and acidic residues; sequence HPGHEDHQQQQEEVKQHDR.

Its subcellular location is the nucleus. Its function is as follows. Transcription factor probably involved in regulation of gene cluster that mediates the biosynthesis of a tyrosine-derived cytochalasan acting as a fungal signal recognized by resistant rice plants and leads to avirulence in Pi33 resistant rice cultivars. This is Pyrichalasin H cluster regulator BC2 from Pyricularia oryzae (strain 70-15 / ATCC MYA-4617 / FGSC 8958) (Rice blast fungus).